The following is a 1955-amino-acid chain: 227 kDa spindle- and centromere-associated protein (1955 aa).

Coiled coils occupy residues 82-129 (KKRI…NDDV), 152-317 (EWAS…ELES), 385-1747 (VRNI…LIAL), and 1770-1813 (ERIV…ERFI). Disordered stretches follow at residues 1865-1896 (PTEQ…SYTY) and 1912-1955 (MTSS…TFSE). A compositionally biased stretch (polar residues) spans 1878-1896 (RTSSTIKSSEGTTRESYTY). The span at 1938 to 1948 (RKSRPATRKQQ) shows a compositional bias: basic residues.

The protein resides in the cytoplasm. Its subcellular location is the cytoskeleton. The protein localises to the microtubule organizing center. It is found in the centrosome. It localises to the chromosome. The protein resides in the centromere. Its subcellular location is the kinetochore. The protein localises to the spindle. In terms of biological role, may play a role in the organization of the spindle apparatus and its interaction with the centromeres. In Parascaris univalens (Nematode worm), this protein is 227 kDa spindle- and centromere-associated protein (PUMA1).